Consider the following 842-residue polypeptide: Glycogen phosphorylase, muscle form (842 aa).

Serine 2 bears the N-acetylserine mark. Serine 15 is subject to Phosphoserine; by PHK; in form phosphorylase A. AMP contacts are provided by aspartate 43 and tyrosine 76. Residues tyrosine 204 and tyrosine 227 each carry the phosphotyrosine modification. Arginine 310–cysteine 319 contributes to the AMP binding site. Residue serine 430 is modified to Phosphoserine. Position 473 is a phosphotyrosine (tyrosine 473). An N6-(pyridoxal phosphate)lysine modification is found at lysine 681. Residues serine 747 and serine 748 each carry the phosphoserine modification.

This sequence belongs to the glycogen phosphorylase family. As to quaternary structure, homodimer. Homotetramer; to form the enzymatically active phosphorylase A. Pyridoxal 5'-phosphate serves as cofactor. Post-translationally, phosphorylation of Ser-15 converts phosphorylase B (unphosphorylated) to phosphorylase A.

It catalyses the reaction [(1-&gt;4)-alpha-D-glucosyl](n) + phosphate = [(1-&gt;4)-alpha-D-glucosyl](n-1) + alpha-D-glucose 1-phosphate. With respect to regulation, allosterically regulated through the non-covalent binding of metabolites, being activated by AMP and inhibited by ATP, ADP, and glucose-6-phosphate. The activity is also controlled by post-translational modifications including phosphorylation. Allosteric enzyme that catalyzes the rate-limiting step in glycogen catabolism, the phosphorolytic cleavage of glycogen to produce glucose-1-phosphate, and plays a central role in maintaining cellular and organismal glucose homeostasis. The chain is Glycogen phosphorylase, muscle form from Bos taurus (Bovine).